We begin with the raw amino-acid sequence, 203 residues long: Outer-membrane lipoprotein LolB (203 aa).

The N-terminal stretch at 1–21 (MRLSASLFHIALVTVLLVLAG) is a signal peptide. C22 carries N-palmitoyl cysteine lipidation. A lipid anchor (S-diacylglycerol cysteine) is attached at C22.

The protein belongs to the LolB family. As to quaternary structure, monomer.

It localises to the cell outer membrane. Plays a critical role in the incorporation of lipoproteins in the outer membrane after they are released by the LolA protein. This is Outer-membrane lipoprotein LolB from Shewanella frigidimarina (strain NCIMB 400).